Reading from the N-terminus, the 2281-residue chain is Retinal-specific phospholipid-transporting ATPase ABCA4 (2281 aa).

Over 1 to 24 the chain is Cytoplasmic; sequence MGFARQIKLLLWKNWTLRKRQKIR. Residues 25–45 traverse the membrane as a helical segment; sequence FVVELVWPLSLFLVLIWLRNV. Over 46-646 the chain is Extracellular; that stretch reads NPLYSKHECH…MPYPCFVDDS (601 aa). Disulfide bonds link cysteine 54/cysteine 81 and cysteine 75/cysteine 324. Residue asparagine 98 is glycosylated (N-linked (GlcNAc...) asparagine). Residues serine 336 and asparagine 338 each coordinate Mg(2+). Cysteine 370 and cysteine 519 are oxidised to a cystine. 2 N-linked (Hex...) asparagine glycosylation sites follow: asparagine 415 and asparagine 504. Residues arginine 587 and arginine 653 each coordinate an N-all-trans-retinylidenephosphatidylethanolamine. Intrachain disulfides connect cysteine 641–cysteine 1488, cysteine 1442–cysteine 1453, and cysteine 1486–cysteine 1500. The chain crosses the membrane as a helical span at residues 647 to 667; the sequence is FMIILNRCFPIFMVLAWIYSV. The Cytoplasmic portion of the chain corresponds to 668–699; that stretch reads SMTVKSIVLEKELRLKETLKNQGVSNRVIWCT. A helical membrane pass occupies residues 700 to 720; the sequence is WFLDSFSIMSMSICLLTIFIM. The Extracellular segment spans residues 721–730; the sequence is HGRILHYSNP. A helical membrane pass occupies residues 731–751; sequence FILFLFLLAFSIATIMQCFLL. The Cytoplasmic portion of the chain corresponds to 752–759; it reads STFFSRAS. A helical transmembrane segment spans residues 760–780; that stretch reads LAAACSGVIYFTLYLPHILCF. Over 781–835 the chain is Extracellular; sequence AWQDRITADMKMAVSLLSPVAFGFGTEYLARFEEQGVGLQWSNIGNSPMEGDEFS. The helical transmembrane segment at 836–856 threads the bilayer; it reads FLMSMKMMLLDAALYGLLAWY. At 857–1374 the chain is on the cytoplasmic side; sequence LDQVFPGDYG…IRSHKDFLAQ (518 aa). Residue threonine 901 is modified to Phosphothreonine. Residues 929–1160 enclose the ABC transporter 1 domain; sequence VCVKNLVKIF…FGTGFYLTLV (232 aa). ATP-binding residues include phenylalanine 938, glycine 966, and lysine 969. Mg(2+) is bound at residue threonine 970. ATP contacts are provided by threonine 971, glutamine 1010, lysine 1054, glycine 1064, glycine 1065, and histidine 1118. Position 1185 is a phosphoserine (serine 1185). The disordered stretch occupies residues 1295–1340; the sequence is ENINLRHPCSGPSEKAGQTPQGSSSHPREPAAHPEGQPPPEREGHS. The span at 1310–1319 shows a compositional bias: polar residues; that stretch reads AGQTPQGSSS. Threonine 1313 is subject to Phosphothreonine. 2 positions are modified to phosphoserine: serine 1317 and serine 1319. A helical membrane pass occupies residues 1375–1395; sequence IVLPATFVFLALMLSLIIPPF. At 1396–1679 the chain is on the extracellular side; sequence GEYPALTLHP…TVLTTSVDAV (284 aa). Asparagine 1455 carries N-linked (Hex...) asparagine glycosylation. The N-linked (Hex...) asparagine glycan is linked to asparagine 1527. Asparagine 1586 is a glycosylation site (N-linked (GlcNAc...) asparagine). N-linked (Hex...) asparagine glycosylation occurs at asparagine 1660. Residues 1680–1700 form a helical membrane-spanning segment; sequence VAICVIFAMSFVPASFVLYLI. Residues 1701–1725 lie on the Cytoplasmic side of the membrane; that stretch reads QERVNKAKHLQFVSGVSPTTYWLTN. The helical transmembrane segment at 1726 to 1746 threads the bilayer; the sequence is FLWDIMNYTVSAALVVGIFIG. At 1747–1757 the chain is on the extracellular side; the sequence is FQKKAYTSSEN. The chain crosses the membrane as a helical span at residues 1758–1778; that stretch reads LPALVALLMLYGWAVIPMMYP. Residues 1779–1790 lie on the Cytoplasmic side of the membrane; sequence ASFLFDIPSTAY. The chain crosses the membrane as a helical span at residues 1791 to 1811; that stretch reads VALSCANLFIGINSSAITFVL. The Extracellular portion of the chain corresponds to 1812–1829; the sequence is ELFENNRTLLRINAMLRK. N-linked (GlcNAc...) asparagine glycosylation is present at asparagine 1817. Residues 1830 to 1850 form a helical membrane-spanning segment; it reads LLIIFPHFCLGRGLIDLALSQ. Residues 1851 to 1879 lie on the Cytoplasmic side of the membrane; that stretch reads AVTDVYARFGEEHSSNPFQWDLIGKNLAA. Residues 1880–1900 form a helical membrane-spanning segment; that stretch reads MAVEGVVYFLLTLLIQYQFFF. Over 1901-2281 the chain is Extracellular; that stretch reads SRWTTEPAKE…VDKGNSAPQG (381 aa). Residue asparagine 1931 is glycosylated (N-linked (GlcNAc...) asparagine). An ABC transporter 2 domain is found at 1936–2168; the sequence is LRLNELTKVY…FGDGYIVTMK (233 aa). ATP contacts are provided by asparagine 1972, glycine 1973, lysine 1976, threonine 1977, and threonine 1978. Threonine 1977 provides a ligand contact to Mg(2+). N-linked (GlcNAc...) asparagine glycans are attached at residues asparagine 2004 and asparagine 2050. Residue glycine 2071 participates in ATP binding. The essential for ATP binding and ATPase activity stretch occupies residues 2242-2247; sequence VFVNFA. Residue asparagine 2251 is glycosylated (N-linked (GlcNAc...) asparagine). The tract at residues 2262–2281 is disordered; sequence AAGASRQAKEVDKGNSAPQG.

N-glycosylated. Post-translationally, proteolytic cleavage by trypsin leads to a 120-kDa N-terminal fragment and a 115-kDa C-terminal fragment that are linked through disulfide bonds. In terms of processing, phosphorylation is independent of light exposure and modulates ATPase activity. Expressed in retina namely in the periphery and incisures of the rod outer segments (ROS).

The protein localises to the membrane. It is found in the cell projection. The protein resides in the cilium. It localises to the photoreceptor outer segment. Its subcellular location is the cytoplasmic vesicle. The protein localises to the endoplasmic reticulum. The enzyme catalyses ATP + H2O + phospholipidSide 1 = ADP + phosphate + phospholipidSide 2.. It carries out the reaction an N-all-trans-retinylidenephosphatidylethanolamine(out) + ATP + H2O = an N-all-trans-retinylidenephosphatidylethanolamine(in) + ADP + phosphate + H(+). The catalysed reaction is a 1,2-diacyl-sn-glycero-3-phosphoethanolamine(out) + ATP + H2O = a 1,2-diacyl-sn-glycero-3-phosphoethanolamine(in) + ADP + phosphate + H(+). It catalyses the reaction N-11-cis-retinylidenephosphatidylethanolamine(out) + ATP + H2O = N-11-cis-retinylidenephosphatidylethanolamine(in) + ADP + phosphate + H(+). The enzyme catalyses ATP + H2O = ADP + phosphate + H(+). All-trans-retinal transport activity is reduced by EDTA chelation of Mg2+. All-trans-retinal transport activity is inhibited by N-ethylmaleimide (NEM). Phosphatidylethanolamine transport is strongly inhibited by beryllium fluoride and NEM. Its function is as follows. Flippase that catalyzes in an ATP-dependent manner the transport of retinal-phosphatidylethanolamine conjugates like the 11-cis and all-trans isomers of N-retinylidene-phosphatidylethanolamine from the lumen to the cytoplasmic leaflet of photoreceptor outer segment disk membranes, where N-cis-retinylidene-phosphatidylethanolamine (N-cis-R-PE) is then isomerized to its all-trans isomer (N-trans-R-PE) and reduced by RDH8 to produce all-trans-retinol (all-trans-rol) and therefore prevents the accumulation of excess of 11-cis-retinal and its schiff-base conjugate and the formation of toxic bisretinoid. Displays both ATPase and GTPase activity that is strongly influenced by the lipid environment and the presence of retinoid compounds. Binds the unprotonated form of N-retinylidene-phosphatidylethanolamine with high affinity in the absence of ATP and ATP binding and hydrolysis induce a protein conformational change that causes the dissociation of N-retinylidene-phosphatidylethanolamine. The protein is Retinal-specific phospholipid-transporting ATPase ABCA4 of Bos taurus (Bovine).